The sequence spans 465 residues: Pancreatic triacylglycerol lipase (465 aa).

A signal peptide spans 1 to 16; sequence MLLLWALPLLLGAVAG. 2 cysteine pairs are disulfide-bonded: cysteine 20–cysteine 26 and cysteine 108–cysteine 119. Residue serine 170 is the Nucleophile of the active site. Residue aspartate 194 is the Charge relay system of the active site. Ca(2+)-binding residues include glutamate 205, arginine 208, aspartate 210, and aspartate 213. A disulfide bond links cysteine 255 and cysteine 279. Histidine 281 acts as the Charge relay system in catalysis. Intrachain disulfides connect cysteine 303–cysteine 314, cysteine 317–cysteine 321, and cysteine 449–cysteine 465. Positions 355–465 constitute a PLAT domain; sequence WRYQVAVTLS…EDILLTLTPC (111 aa).

This sequence belongs to the AB hydrolase superfamily. Lipase family. In terms of assembly, forms a 1:1 stoichiometric complex with (pro)colipase/CLPS.

The protein localises to the secreted. It catalyses the reaction a triacylglycerol + H2O = a diacylglycerol + a fatty acid + H(+). The catalysed reaction is 1,2,3-tributanoylglycerol + H2O = dibutanoylglycerol + butanoate + H(+). It carries out the reaction 1,2,3-tri-(9Z-octadecenoyl)-glycerol + H2O = di-(9Z)-octadecenoylglycerol + (9Z)-octadecenoate + H(+). The enzyme catalyses all-trans-retinyl hexadecanoate + H2O = all-trans-retinol + hexadecanoate + H(+). It catalyses the reaction 1,2-di-(9Z-octadecenoyl)-glycerol + H2O = (9Z-octadecenoyl)-glycerol + (9Z)-octadecenoate + H(+). Inhibited by bile salts, is reactivated by (pro)colipase/CLPS. In terms of biological role, plays an important role in fat metabolism. It preferentially splits the esters of long-chain fatty acids at positions 1 and 3, producing mainly 2-monoacylglycerol and free fatty acids, and shows considerably higher activity against insoluble emulsified substrates than against soluble ones. The polypeptide is Pancreatic triacylglycerol lipase (PNLIP) (Oryctolagus cuniculus (Rabbit)).